The following is a 557-amino-acid chain: Glypican-1 (557 aa).

A signal peptide spans Met-1–Gly-23. Cystine bridges form between Cys-32–Cys-68, Cys-62–Cys-255, Cys-69–Cys-258, Cys-190–Cys-342, Cys-245–Cys-278, Cys-267–Cys-414, and Cys-271–Cys-400. 2 N-linked (GlcNAc...) asparagine glycosylation sites follow: Asn-79 and Asn-116. The segment at Phe-477–Ala-531 is disordered. Ser-485, Ser-487, and Ser-489 each carry an O-linked (Xyl...) (heparan sulfate) serine glycan. Ser-529 carries GPI-anchor amidated serine lipidation. Residues Ala-530–Arg-557 constitute a propeptide, removed in mature form.

This sequence belongs to the glypican family. Post-translationally, S-nitrosylated in a Cu(2+)-dependent manner. Nitric acid (NO) is released from the nitrosylated cysteines by ascorbate or by some other reducing agent, in a Cu(2+) or Zn(2+) dependent manner. This free nitric oxide is then capable of cleaving the heparan sulfate side chains. N- and O-glycosylated. N-glycosylation is mainly of the complex type containing sialic acid. O-glycosylated with heparan sulfate. The heparan sulfate chains can be cleaved either by the action of heparanase or, degraded by a deaminative process that uses nitric oxide (NO) released from the S-nitrosylated cysteines. This process is triggered by ascorbate, or by some other reducing agent, in a Cu(2+)- or Zn(2+) dependent manner. Cu(2+) ions are provided by ceruloproteins such as APP, PRNP or CP which associate with GCP1 in intracellular compartments or lipid rafts. In terms of processing, this cell-associated glypican is further processed to give rise to a medium-released species.

The protein resides in the cell membrane. The protein localises to the endosome. Its subcellular location is the secreted. It localises to the extracellular space. In terms of biological role, cell surface proteoglycan that bears heparan sulfate. Binds, via the heparan sulfate side chains, alpha-4 (V) collagen and participates in Schwann cell myelination. May act as a catalyst in increasing the rate of conversion of prion protein PRPN(C) to PRNP(Sc) via associating (via the heparan sulfate side chains) with both forms of PRPN, targeting them to lipid rafts and facilitating their interaction. Required for proper skeletal muscle differentiation by sequestering FGF2 in lipid rafts preventing its binding to receptors (FGFRs) and inhibiting the FGF-mediated signaling. Binds Cu(2+) or Zn(2+) ions. This Mus musculus (Mouse) protein is Glypican-1 (Gpc1).